The chain runs to 671 residues: Pescadillo homolog (671 aa).

Coiled-coil stretches lie at residues 294 to 323 (NQAQ…ELFR) and 548 to 584 (QALR…TRKM). The region spanning 317–403 (KVRELFRGLT…LVLPVTGYRI (87 aa)) is the BRCT domain. 2 disordered regions span residues 552 to 577 (KAQE…VKRQ) and 634 to 671 (GLVN…KWVQ). Over residues 634-651 (GLVNKRLEARRQRAEAKG) the composition is skewed to basic and acidic residues.

It belongs to the pescadillo family.

Its subcellular location is the nucleus. The protein resides in the nucleolus. It localises to the nucleoplasm. Functionally, required for maturation of ribosomal RNAs and formation of the large ribosomal subunit. The chain is Pescadillo homolog from Leishmania major.